We begin with the raw amino-acid sequence, 249 residues long: Triosephosphate isomerase (249 aa).

The substrate site is built by Asn-10 and Lys-12. The active-site Electrophile is His-94. Catalysis depends on Glu-166, which acts as the Proton acceptor.

Belongs to the triosephosphate isomerase family. Homodimer.

It carries out the reaction D-glyceraldehyde 3-phosphate = dihydroxyacetone phosphate. The protein operates within carbohydrate biosynthesis; gluconeogenesis. Its pathway is carbohydrate degradation; glycolysis; D-glyceraldehyde 3-phosphate from glycerone phosphate: step 1/1. The polypeptide is Triosephosphate isomerase (tpiA) (Emericella nidulans (strain FGSC A4 / ATCC 38163 / CBS 112.46 / NRRL 194 / M139) (Aspergillus nidulans)).